Consider the following 76-residue polypeptide: UPF0248 protein PAE2518 (76 aa).

The protein belongs to the UPF0248 family.

This chain is UPF0248 protein PAE2518, found in Pyrobaculum aerophilum (strain ATCC 51768 / DSM 7523 / JCM 9630 / CIP 104966 / NBRC 100827 / IM2).